A 62-amino-acid polypeptide reads, in one-letter code: Photosystem II reaction center protein Z (62 aa).

A run of 2 helical transmembrane segments spans residues 8-28 (AVFA…VVFA) and 41-61 (FSGT…NSLI).

Belongs to the PsbZ family. In terms of assembly, PSII is composed of 1 copy each of membrane proteins PsbA, PsbB, PsbC, PsbD, PsbE, PsbF, PsbH, PsbI, PsbJ, PsbK, PsbL, PsbM, PsbT, PsbY, PsbZ, Psb30/Ycf12, at least 3 peripheral proteins of the oxygen-evolving complex and a large number of cofactors. It forms dimeric complexes.

The protein resides in the plastid. The protein localises to the chloroplast thylakoid membrane. May control the interaction of photosystem II (PSII) cores with the light-harvesting antenna, regulates electron flow through the 2 photosystem reaction centers. PSII is a light-driven water plastoquinone oxidoreductase, using light energy to abstract electrons from H(2)O, generating a proton gradient subsequently used for ATP formation. This is Photosystem II reaction center protein Z from Jasminum nudiflorum (Winter jasmine).